The sequence spans 85 residues: uncharacterized protein (85 aa).

This is an uncharacterized protein from Saccharomyces cerevisiae (strain ATCC 204508 / S288c) (Baker's yeast).